The primary structure comprises 226 residues: Ribonuclease 3 (226 aa).

In terms of domain architecture, RNase III spans 7–129; that stretch reads LPRLCRTLGY…IIGAIYLDSD (123 aa). Position 42 (Glu42) interacts with Mg(2+). Residue Asp46 is part of the active site. Mg(2+) contacts are provided by Asp115 and Glu118. The active site involves Glu118. Positions 156–226 constitute a DRBM domain; sequence DAKTLLQEYL…AAQVLELLKK (71 aa).

The protein belongs to the ribonuclease III family. Homodimer. The cofactor is Mg(2+).

The protein resides in the cytoplasm. It carries out the reaction Endonucleolytic cleavage to 5'-phosphomonoester.. Its function is as follows. Digests double-stranded RNA. Involved in the processing of primary rRNA transcript to yield the immediate precursors to the large and small rRNAs (23S and 16S). Processes some mRNAs, and tRNAs when they are encoded in the rRNA operon. Processes pre-crRNA and tracrRNA of type II CRISPR loci if present in the organism. The protein is Ribonuclease 3 of Shewanella oneidensis (strain ATCC 700550 / JCM 31522 / CIP 106686 / LMG 19005 / NCIMB 14063 / MR-1).